A 233-amino-acid polypeptide reads, in one-letter code: tRNA (guanine-N(7)-)-methyltransferase (233 aa).

A disordered region spans residues 1–22; sequence MIDENHPMRAAGNFFGRRHGKP. S-adenosyl-L-methionine is bound by residues Glu64, Glu89, Asp116, and Asp138. The active site involves Asp138. Substrate is bound by residues Lys142, Asp174, and 212-215; that span reads TRYE.

It belongs to the class I-like SAM-binding methyltransferase superfamily. TrmB family.

It carries out the reaction guanosine(46) in tRNA + S-adenosyl-L-methionine = N(7)-methylguanosine(46) in tRNA + S-adenosyl-L-homocysteine. It functions in the pathway tRNA modification; N(7)-methylguanine-tRNA biosynthesis. In terms of biological role, catalyzes the formation of N(7)-methylguanine at position 46 (m7G46) in tRNA. The protein is tRNA (guanine-N(7)-)-methyltransferase of Brucella melitensis biotype 1 (strain ATCC 23456 / CCUG 17765 / NCTC 10094 / 16M).